Reading from the N-terminus, the 959-residue chain is Protovillin (959 aa).

The tail stretch occupies residues 1–53 (MEPPLELPTQRKRVIPSKFGILKRNAEIEAEKNRENLQQSSCFSHINEIGKEI). The core stretch occupies residues 54–832 (GLEIWKIIDD…PIMLPTSGVT (779 aa)). 6 Gelsolin-like repeats span residues 64-116 (STIQ…SQET), 204-244 (IRVK…LEKG), 309-366 (IKLY…DQRT), 479-529 (RNKF…EDKG), 603-647 (INIH…KEAA), and 713-754 (FKVF…TEKL). 2 consecutive repeat copies span residues 840-849 (TPKPITTPTV) and 851-860 (TPKPITTPTV). The tract at residues 840–860 (TPKPITTPTVTTPKPITTPTV) is 2 X 10 AA repeats of T-P-K-P-I-T-T-P-T-V. In terms of domain architecture, HP spans 895–959 (TTITTFYPLS…KQLRVDNGLF (65 aa)).

It belongs to the villin/gelsolin family.

The protein resides in the cytoplasm. It localises to the cytoskeleton. Its function is as follows. Caps actin filaments but displays neither severing nor cross-linking nor nucleating activities. Protovillin seems to be a villin precursor with only archaic capping activity. It lacks essential changes in the sequence to allow bundling of actin filaments and consequently the appearance of microvilli. This Dictyostelium discoideum (Social amoeba) protein is Protovillin (vilB).